The sequence spans 100 residues: Large ribosomal subunit protein mL53 (100 aa).

This sequence belongs to the mitochondrion-specific ribosomal protein mL53 family. Component of the mitochondrial large ribosomal subunit (mt-LSU). Mature yeast 74S mitochondrial ribosomes consist of a small (37S) and a large (54S) subunit. The 37S small subunit contains a 15S ribosomal RNA (15S mt-rRNA) and at least 32 different proteins. The 54S large subunit contains a 21S rRNA (21S mt-rRNA) and at least 45 different proteins.

The protein localises to the mitochondrion. In terms of biological role, component of the mitochondrial ribosome (mitoribosome), a dedicated translation machinery responsible for the synthesis of mitochondrial genome-encoded proteins, including at least some of the essential transmembrane subunits of the mitochondrial respiratory chain. The mitoribosomes are attached to the mitochondrial inner membrane and translation products are cotranslationally integrated into the membrane. The sequence is that of Large ribosomal subunit protein mL53 (mrpl44) from Schizosaccharomyces pombe (strain 972 / ATCC 24843) (Fission yeast).